An 883-amino-acid polypeptide reads, in one-letter code: MSDSVAPDVPVIREGKNPAQHRDRTTVDREALSPMMRHYVDLKDEYPQTILLYRMGDFYETFFEDACTIAQALELVLTSRQSGNEVGRVAMAGIPHHQLDRYSRLLVEKGFAVAICDQMEDPAQAQGLVKREVTRVITPGTLLEEGMLNARSNNFLAAFVLAGNHWGLAYADISTGEFLTTQFSERETLAQELLRLQPSEVLFPTDAPDIQQILRPGEQSDLLPEGLPNQFCYSLRSQTSFTQAEARQRIQEVYGVRSLEGLGCEHLPLAVRAAGGLLAYLEATQKDTHIPLQPLATYTLSQYLVLDHQSRRNLELTQTSRDGTFRGSLLWAIDRTRTAMGSRALRRWLLQPLLDLNDIQARQAAITELLPQTGFRKELQNQLQKIYDLERLAGRAGSGTANARDLVALAESLGQLTELSHKVAKCEAQYLQALQTVPPILDQLAQRLRAHLVESPPISLTEGGLIKPSVNPELDQMRQQIVSDQQWIANLEKDERERTGISTLKVGFNKAFGYFISISRAKADQAPDDYIRKQTLTNEERFITPELKEREARIFTAQTEQFQLEYDLFVTLRTEVGEQASLIRTVAAAVSAVDILVGLTEVAVYQGYCCPTMSDSREIQILDGRHPVVEQSLPPGFFVPNATELGSAPSAELTPHPDLVILTGPNASGKSCYLRQVGLIQLMAQIGSYVPAQSARLGICDRIFTRVGAVDDLATGQSTFMVEMNETANILNHASSKSLVLLDEIGRGTATFDGLAIAWSVAEHLAAVIQARTIFATHYHELNELASLVENVANYQVLVKELPDQIIFLHQVCPGGASRSYGIEAGRLAGLPPSVIKRAKQVMKQIEQHSKIAVGLRKGNTQPRARKSSAETEAKTQQFELPF.

The disordered stretch occupies residues 1–25 (MSDSVAPDVPVIREGKNPAQHRDRT). Positions 11–25 (VIREGKNPAQHRDRT) are enriched in basic and acidic residues. 664–671 (GPNASGKS) lines the ATP pocket. The tract at residues 857 to 883 (RKGNTQPRARKSSAETEAKTQQFELPF) is disordered.

The protein belongs to the DNA mismatch repair MutS family.

Its function is as follows. This protein is involved in the repair of mismatches in DNA. It is possible that it carries out the mismatch recognition step. This protein has a weak ATPase activity. The polypeptide is DNA mismatch repair protein MutS (Acaryochloris marina (strain MBIC 11017)).